A 118-amino-acid chain; its full sequence is MKLYKKRGIIYIHSTFNNTISTLTDVFGNTIVWYSAGILGYKGPKKSTSLASQLISEKITISILKNNIKVVDIYIKGLGLGKETTLRIINNSGIFIRSITDITPIPHNGCRKKKKRRV.

The protein belongs to the universal ribosomal protein uS11 family. As to quaternary structure, part of the 30S ribosomal subunit. Interacts with proteins S7 and S18. Binds to IF-3.

Located on the platform of the 30S subunit, it bridges several disparate RNA helices of the 16S rRNA. Forms part of the Shine-Dalgarno cleft in the 70S ribosome. This is Small ribosomal subunit protein uS11 from Carsonella ruddii (strain PV).